Reading from the N-terminus, the 281-residue chain is MYLIEILKSIFFGIVEGITEWLPISSTGHLILAEEFIQYQNQNEAFMSMFNVVIQLGAILAVMVIYFNKLNPFKPTKDKQEVRKTWRLWLKVLIATLPLLGVFKFDDWFDTHFHNMVSVALMLIIYGVAFIYLEKRNKARAIEPSVTELDKLPYTTAFYIGLFQVLALLPGTSRSGATIVGGLLNGTSRSVVTEFTFYLGIPVMFGASALKIFKFVKAGELLSFGQLFLLLVAMGVAFAVSMVAIRFLTSYVKKHDFTLFGKYRIVLGSVLLLYSFVRLFV.

A run of 8 helical transmembrane segments spans residues 4-24 (IEILKSIFFGIVEGITEWLPI), 45-65 (AFMSMFNVVIQLGAILAVMVI), 89-109 (WLKVLIATLPLLGVFKFDDWF), 113-133 (FHNMVSVALMLIIYGVAFIYL), 152-172 (LPYTTAFYIGLFQVLALLPGT), 190-210 (SVVTEFTFYLGIPVMFGASAL), 225-245 (GQLFLLLVAMGVAFAVSMVAI), and 257-277 (FTLFGKYRIVLGSVLLLYSFV).

The protein belongs to the UppP family.

Its subcellular location is the cell membrane. It carries out the reaction di-trans,octa-cis-undecaprenyl diphosphate + H2O = di-trans,octa-cis-undecaprenyl phosphate + phosphate + H(+). Functionally, catalyzes the dephosphorylation of undecaprenyl diphosphate (UPP). Confers resistance to bacitracin. The chain is Undecaprenyl-diphosphatase from Streptococcus pneumoniae (strain Hungary19A-6).